Consider the following 172-residue polypeptide: AIG2-like protein C (172 aa).

13–18 lines the substrate pocket; the sequence is YGSLQE. Catalysis depends on E81, which acts as the Proton acceptor.

This sequence belongs to the gamma-glutamylcyclotransferase family. As to expression, expressed in flowers, leaves, stems and roots.

Putative gamma-glutamylcyclotransferase. This is AIG2-like protein C from Arabidopsis thaliana (Mouse-ear cress).